Reading from the N-terminus, the 274-residue chain is RNA polymerase sigma factor SigI4 (274 aa).

The Polymerase core binding motif lies at 87-100 (EEYSVGLMAFNEAI). The segment at residues 226–245 (LSELMGLVNVHRKTVERNRK) is a DNA-binding region (H-T-H motif).

The protein belongs to the sigma-70 factor family. SigI subfamily. In terms of assembly, interacts with RsgI4.

The protein localises to the cytoplasm. Its activity is regulated as follows. Negatively regulated by the anti-sigma-I factor RsgI4. Binding of the polysaccharide substrate to RsgI4 may lead to the release and activation of SigI4. Its function is as follows. Sigma factors are initiation factors that promote the attachment of RNA polymerase to specific initiation sites and are then released. This sigma factor is involved in regulation of cellulosomal genes via an external polysaccharide-sensing mechanism. The protein is RNA polymerase sigma factor SigI4 of Acetivibrio thermocellus (strain ATCC 27405 / DSM 1237 / JCM 9322 / NBRC 103400 / NCIMB 10682 / NRRL B-4536 / VPI 7372) (Clostridium thermocellum).